The sequence spans 92 residues: UPF0223 protein SSA_0938 (92 aa).

This sequence belongs to the UPF0223 family.

This is UPF0223 protein SSA_0938 from Streptococcus sanguinis (strain SK36).